Consider the following 213-residue polypeptide: Orotate phosphoribosyltransferase (213 aa).

Lys-26 contacts 5-phospho-alpha-D-ribose 1-diphosphate. 34-35 (FF) contributes to the orotate binding site. Residues 72–73 (YK), Arg-99, Lys-100, Lys-103, His-105, and 124–132 (DDVITAGTA) contribute to the 5-phospho-alpha-D-ribose 1-diphosphate site. Orotate is bound by residues Thr-128 and Arg-156.

This sequence belongs to the purine/pyrimidine phosphoribosyltransferase family. PyrE subfamily. Homodimer. It depends on Mg(2+) as a cofactor.

It carries out the reaction orotidine 5'-phosphate + diphosphate = orotate + 5-phospho-alpha-D-ribose 1-diphosphate. It functions in the pathway pyrimidine metabolism; UMP biosynthesis via de novo pathway; UMP from orotate: step 1/2. Functionally, catalyzes the transfer of a ribosyl phosphate group from 5-phosphoribose 1-diphosphate to orotate, leading to the formation of orotidine monophosphate (OMP). The protein is Orotate phosphoribosyltransferase of Haemophilus influenzae (strain 86-028NP).